Here is a 520-residue protein sequence, read N- to C-terminus: Translation initiation factor IF3-1, mitochondrial (520 aa).

A mitochondrion-targeting transit peptide spans 1-66; that stretch reads MAIWRIINRS…SNIFQNLRFL (66 aa). Over residues 271 to 282 the composition is skewed to basic and acidic residues; it reads ARVKEESPKPDS. Residues 271–520 form a disordered region; the sequence is ARVKEESPKP…YGIFSTPKTK (250 aa). Polar residues predominate over residues 336 to 361; it reads EPQSPNQHVNPQRPRFSNQAPNQQPT. The segment covering 369–379 has biased composition (pro residues); that stretch reads PNQPPSAPRPQ. 2 stretches are compositionally biased toward polar residues: residues 404–422 and 458–468; these read NQAPNQQSTGRFNPQFPNQ and FQNQAPNQQPT. Residues 473–485 are compositionally biased toward pro residues; that stretch reads PQPPNPPRAPPRP.

This sequence belongs to the IF-3 family. As to quaternary structure, monomer.

The protein localises to the mitochondrion. Functionally, IF-3 binds to the 30S ribosomal subunit and shifts the equilibrium between 70S ribosomes and their 50S and 30S subunits in favor of the free subunits, thus enhancing the availability of 30S subunits on which protein synthesis initiation begins. This chain is Translation initiation factor IF3-1, mitochondrial, found in Arabidopsis thaliana (Mouse-ear cress).